The sequence spans 385 residues: DNA replication and repair protein RecF (385 aa).

An ATP-binding site is contributed by 30–37; that stretch reads GANAAGKT.

Belongs to the RecF family.

It is found in the cytoplasm. The RecF protein is involved in DNA metabolism; it is required for DNA replication and normal SOS inducibility. RecF binds preferentially to single-stranded, linear DNA. It also seems to bind ATP. This is DNA replication and repair protein RecF from Herpetosiphon aurantiacus (strain ATCC 23779 / DSM 785 / 114-95).